Here is a 354-residue protein sequence, read N- to C-terminus: NADH-quinone oxidoreductase subunit H (354 aa).

The next 8 helical transmembrane spans lie at 25 to 45 (LVRILVVAVVILLCVAYLILW), 91 to 111 (WVYLVAPVMVVVPAFAVWAVI), 126 to 146 (LLYAISISSVGVYGVILAGWA), 170 to 190 (MGFALVVVMMTAGTMNLSDIV), 205 to 225 (FLSWNWLPLLPAFVVYFVSGI), 257 to 277 (LFFLAEYINMIVISALASILF), 290 to 310 (FIPGIVWLVLKVFLLLSVFIW), and 330 to 350 (VFLPVTVIWVVVVGFWIMSPL).

This sequence belongs to the complex I subunit 1 family. As to quaternary structure, NDH-1 is composed of 14 different subunits. Subunits NuoA, H, J, K, L, M, N constitute the membrane sector of the complex.

It localises to the cell inner membrane. It carries out the reaction a quinone + NADH + 5 H(+)(in) = a quinol + NAD(+) + 4 H(+)(out). NDH-1 shuttles electrons from NADH, via FMN and iron-sulfur (Fe-S) centers, to quinones in the respiratory chain. The immediate electron acceptor for the enzyme in this species is believed to be ubiquinone. Couples the redox reaction to proton translocation (for every two electrons transferred, four hydrogen ions are translocated across the cytoplasmic membrane), and thus conserves the redox energy in a proton gradient. This subunit may bind ubiquinone. The sequence is that of NADH-quinone oxidoreductase subunit H from Paraburkholderia phymatum (strain DSM 17167 / CIP 108236 / LMG 21445 / STM815) (Burkholderia phymatum).